Reading from the N-terminus, the 315-residue chain is MMELINNRGMRDWMIFIKVAEVGNLSRAARELDISISAVSKSLSRLENSIEVTLLRRDSHHLELTGAGQTAYASMKRITSSFQSLLDELRNPDKIIRGSIKFSAPAIVCEFLANKWIWEFTASYPDTKIYLDSRERSDFFSKSLEFDELVFKSGIIESEDLVYRKISPLKLVLCASPKYIRKYGRISHPGDLENHIIVGLHNHGLSGPLTLFRQDESYTISGAVNVHLSSNNLLSVLNLVLEGKGINLMTPAWLATKYLKNNELEIILPEWRVPDLPIYLVWRHRQYYSPLFQRFLSFIEDKWNNRPQIDFLNDD.

Residues 8–65 enclose the HTH lysR-type domain; it reads RGMRDWMIFIKVAEVGNLSRAARELDISISAVSKSLSRLENSIEVTLLRRDSHHLELT. Residues 25 to 44 constitute a DNA-binding region (H-T-H motif); that stretch reads LSRAARELDISISAVSKSLS.

It belongs to the LysR transcriptional regulatory family.

In terms of biological role, probable regulatory protein. Its target is not known. This Salmonella typhimurium (strain LT2 / SGSC1412 / ATCC 700720) protein is Probable HTH-type transcriptional regulator SinR (sinR).